The chain runs to 180 residues: MGDCNISTSDNKQNRKNHEIRVPRVRVIGSDGEMVGVLSRDEALAMAEKEGLDLVEIQPQADPPVCKVMNFGKFKFEQQKKANEAKKKTKQVEIKELKFRPVTDEGDYQIKLRNMRRFLEEGDKVKINIRFRGREMSHQELGRQMATRIEMDLGDDVVIESRPRLEGRQMVMMVAPRKKS.

This sequence belongs to the IF-3 family. Monomer.

The protein localises to the cytoplasm. Functionally, IF-3 binds to the 30S ribosomal subunit and shifts the equilibrium between 70S ribosomes and their 50S and 30S subunits in favor of the free subunits, thus enhancing the availability of 30S subunits on which protein synthesis initiation begins. The chain is Translation initiation factor IF-3 from Xylella fastidiosa (strain 9a5c).